We begin with the raw amino-acid sequence, 3564 residues long: MWTRLAFCCWALALVSGWTNFQPMAPSLNFSFRLFPEASPGALGRLAVPPRSGEEEAVGSKVERLGRTFRSRVRRLRELSDRLELVFLVDESSSVGQTNFLNELKFVRKLLSDFPVVSTATRVAIVTFSSKNNVVARVDYISTSRAHQHKCALLSREIPAITYRGGGTYTMGAFQQAAQILRHSRENSTKVIFLITDGYSNGGDPRPIAASLRDFGVEIFTFGIWQGNIRELNDMASTPKEEHCYLLHSFEEFEALARRALHEDLPSGSFIQEDMAHCSYLCEAGRDCCDRMASCKCGTHTGQFECICEKGYYGKGLQYECTACPPGTYKPEASPGGISTCIPCPDENHTSPPGSTAPEDCVCREGYQRSGQTCEVVHCPALKPPENGFFIQNTCKNHFNAACGVRCRPGFDLVGSSIHLCQPNGLWSGTESFCRVRTCPHLRQPKHGHISCSTVEMSYNTVCLVTCNEGYRLEGHAKLTCQGNAQWDGTEPRCVERHCATFQKPKGVIISPPSCGKQPAKPGMICQLGCRQGYILSGIREVRCATSGKWSARVQTAVCKDVEAPQISCPNDIKAKTEGQQDSANVTWQVPTAKDNSGEKVSVHVHPAFSPPYLFPIGEVAITYTATDSSGNQASCTFYIKVIDVEPPVIDWCRSPPPIQVVEKEHPASWDEPQFSDNSGAELVITSSHTQGDLFPHGETVVWYTATDPSGNNRTCDIHIVIKGSPCEVPFTPVNGDFICAQDSAGVNCSLTCREGYDFTEGSTEKYYCAFEDGIWRPPYSTEWPDCAIKRFANHGFKSFEMLYKTTRCDDMDLFKKFSAAFETTLGKMVPSFCSDADDIDCRLEDLTKKYCIEYNYNYENGFAIGPGGWGAGNRLDYSYDHFLDVVQETPADVGKTRSSRIKRTVPLSDPQIQLIFNITASVPLPEERNDTVELENQQRLIRTLETITNRLKSTLNKGPMYSFQLASETVVADSNSLETEKAFLFCRPGSVLRGRMCVNCPLGTSYSLEHSTCESCLMGSYQDEEGQLECKLCPPRTHTEYLHSRSISECKAQCKQGTYSSSGLETCESCPLGTYQPDFGSRSCLPCPETTTTVKRGAVDISACGVPCPVGEFSRSGLTPCYPCPRDYYQPNAGKSFCLACPFYGTTTITGATSITDCSSFSSTFSAAEESIVPLAAPGPTQNKYEVFHECFLNPCHNSGTCQQLGRGYVCLCPPGYTGLKCETDIDECSSLPCLNGGICRDKVGGFTCECSSGYTGQICEENINECSSSPCLNKGTCTDGLASYRCTCVSGYVGVHCETDVNECQSSPCLNNAVCKDQVGGFSCKCPPGFLGTRCEKNVDECLSQPCQNGATCKDGANSFRCQCPAGFTGPHCELNINECQSNPCRNQATCVDELNSYSCKCRPGFSGRRCETEQPSGFNLDFEVSGIYGYVLLDGVLPTLHAITCAFWMKSSDVINYGTPISYALEGNKDNTFLLTDYNGWVLYVNGKEKITNCPSVNDGIWHHIAITWTSTGGAWRVYIDGELSDSGTGLSVGKAIPGGGALVLGQEQDKKGEGFNPAESFVGSISQLNLWDYVLSPQQVKSLASSCPEELSRGNVLAWPDFVSGITGKVKVDSSSIFCSDCPSLEGSVPHLRPASGDRKPGSKVSLFCDPGFQMVGNPVQYCLNQGQWSQPLPHCERIRCGLPPTLENGFYSAEDLHAGSTVTYQCTSGYYLLGDSRMFCTDNGSWNGISPSCLDVDECAVGSDCSEHASCLNTNGSYICSCKPPYTGDGKNCAEPVKCKAPENPENGHSLGKIYSVGAEVTFSCEEGHQLVGVRKITCLESGEWDHLRPSCEAISCGAPPVPENGGVDGSAFTYGSKVRYRCDKGYTLAGDEESACLASGSWSHSSPVCELVKCSQPENINNGKYILSGLTYLSIASYSCEDGYSLQGPSLIECTASGSWDRAPPSCQLVSCGEPPMVKDALTTGSNFTFGNMVTYTCKEGYTLAGPDTIICQANGKWNSSNHQCLAVSCDEPPNVDHASPETAHRLFGDTAFYYCADGYSLADNSQLICNAQGNWVPPEGQAVPRCIAHFCEKPPSVSYSILESVSKAKFAAGSVVSFKCMEGFVLNTSAKIECLRGGQWSPSPLSVQCIPVRCGEPPSITNGYPSGTNYSFGAVVAYSCHKGFYIKGEKKSTCEATGQWSRPLPTCHPVSCNEPPKVENGFLEHTTGRTFESEARFQCNPGYKAVGSPVFVCQANRHWHSDAPLSCTPLNCGKPPPIQNGFLRGESFEVGSKVQFVCNEGYELVGDNSWTCQKSGKWSKKPSPKCVPTKCAEPPLLENQLVLKELTSEVGVMTISCKEGHALQGPSVLKCLPSGQWNGSFPVCKLVLCQSPPLIPFGVPASSGALHFGSTVKYLCVDGFFLRGNPIILCQVDGTWSSPLPECVPVECPQPEEILNGIIHVQGLAYLSTTLYTCKPGFELVGNTTTLCGENGQWLGGKPMCRPIECPEPKEILNGQFSSVSFQYGQTITYSCDRGFRLEGPKSLTCLETGNWDMDAPSCNAIHCSDPQPIENGFVEGADYRYGAMIIYSCFPGFQVVGHAMQTCEETGWSSSSPTCVPIDCGLPPHIDFGDCTRVSDGQGYFVQEDDMMEVPYLTPHPQHLEATAKASEITEESLVPHASQFLYGTTVSYRCEPGYELLGIPVLVCQEDGTWNGTAPSCISIECDLPVAPENGFLHFTQTTMGSAAQYSCKPGHVLEGSHLRLCLQNKQWSGTVPRCEVISCSEPNPLGNGSIKGNDYSYLGVLHYECDSGYVLNGTEKRTCQENKQWDGHEPVCLPVDCGSPPVPTNGQVTGEEYTFQKEIAYSCGEGFILEGARSRVCLTNGSWSGTTPSCVPVRCPAPPQVANGVTDGLDYGFKKEVTFHCLEGYVLQGTPKLTCQSNGTWDAEVPICKPATCGPPADLPQGFPNGFSFFHGGHIQYQCFTGYKLHGNPSRRCLPDGSWSGSTPSCLPCTCSTPIIQQGTVNATDLGCGKTVQIECFKGFKLLGLPEITCDANGQWSDFPLCEHADCGPLPTVPNGIVIKGSPSEDNVVTYSCRPGYIIQGSSDLICTEKGIWSEPYPTCEPVSCGPPPTVANAVATGEAHTYESKVKLRCLEGYVVDTDTDTFTCQQDGRWFPERINCSPKTCPVPSNRTRIRVHGDDFQVNRQVSVSCTEGFTYDGADRSTCQPDGTWEPPLSEESCIPVVCGQPESPEHGFVVGSEYSFGSTVVYQCDPGYELEGNRERVCQENRQWSGRVAVCRESRCEAPAEFPNGKAVLENTTSGPSLLFSCHRGYTLEGPPEAHCTANGTWSHLAPLCKPNPCPVPFVIPENALLSEREFYVNQNVSIKCREGFLLKGNGIITCNPDETWTQTNARCEKISCGPPTHVENAIARGVHYQYGDMVTFSCYSGYMLEGSLRSVCLENGTWTPPPICRAVCRFPCQNGGVCQRPNACSCPDGWMGRLCEEPICILPCLNGGRCVAPYRCDCPAGWTGSRCHTATCQSPCLNGGKCVRPNRCHCLSSWTGHDCSRKRRSGL.

Residues 1-17 (MWTRLAFCCWALALVSG) form the signal peptide. The 182-residue stretch at 84–265 (ELVFLVDESS…LARRALHEDL (182 aa)) folds into the VWFA domain. The N-linked (GlcNAc...) asparagine glycan is linked to Asn-187. Sushi domains are found at residues 377–436 (VHCP…FCRV), 437–496 (RTCP…RCVE), and 497–561 (RHCA…VCKD). 6 disulfide bridges follow: Cys-379–Cys-421, Cys-407–Cys-434, Cys-439–Cys-481, Cys-467–Cys-494, Cys-499–Cys-544, and Cys-530–Cys-559. 2 HYR domains span residues 560–644 (KDVE…KVID) and 645–724 (VEPP…VIKG). The Sushi 4 domain occupies 725–789 (SPCEVPFTPV…YSTEWPDCAI (65 aa)). 20 disulfide bridges follow: Cys-727–Cys-769, Cys-753–Cys-787, Cys-1192–Cys-1203, Cys-1197–Cys-1212, Cys-1214–Cys-1223, Cys-1230–Cys-1241, Cys-1235–Cys-1250, Cys-1252–Cys-1261, Cys-1268–Cys-1279, Cys-1273–Cys-1288, Cys-1290–Cys-1299, Cys-1306–Cys-1317, Cys-1311–Cys-1326, Cys-1328–Cys-1337, Cys-1344–Cys-1355, Cys-1349–Cys-1364, Cys-1366–Cys-1375, Cys-1382–Cys-1393, Cys-1387–Cys-1402, and Cys-1404–Cys-1413. The EGF-like 1 domain occupies 1188 to 1224 (VFHECFLNPCHNSGTCQQLGRGYVCLCPPGYTGLKCE). In terms of domain architecture, EGF-like 2; calcium-binding spans 1226-1262 (DIDECSSLPCLNGGICRDKVGGFTCECSSGYTGQICE). In terms of domain architecture, EGF-like 3; calcium-binding spans 1264–1300 (NINECSSSPCLNKGTCTDGLASYRCTCVSGYVGVHCE). The EGF-like 4; calcium-binding domain maps to 1302–1338 (DVNECQSSPCLNNAVCKDQVGGFSCKCPPGFLGTRCE). The EGF-like 5; calcium-binding domain maps to 1340–1376 (NVDECLSQPCQNGATCKDGANSFRCQCPAGFTGPHCE). Residues 1378–1414 (NINECQSNPCRNQATCVDELNSYSCKCRPGFSGRRCE) form the EGF-like 6; calcium-binding domain. One can recognise a Pentraxin (PTX) domain in the interval 1419–1623 (SGFNLDFEVS…VKVDSSSIFC (205 aa)). Sushi domains lie at 1624–1682 (SDCP…HCER) and 1683–1740 (IRCG…SCLD). Disulfide bonds link Cys-1626–Cys-1667, Cys-1653–Cys-1680, Cys-1685–Cys-1725, Cys-1711–Cys-1738, Cys-1744–Cys-1756, Cys-1750–Cys-1765, Cys-1767–Cys-1778, Cys-1784–Cys-1824, Cys-1810–Cys-1837, Cys-1842–Cys-1882, Cys-1868–Cys-1895, Cys-1900–Cys-1940, Cys-1926–Cys-1953, Cys-1958–Cys-1998, Cys-1984–Cys-2011, Cys-2016–Cys-2056, Cys-2042–Cys-2073, Cys-2078–Cys-2121, Cys-2107–Cys-2136, Cys-2141–Cys-2181, Cys-2167–Cys-2194, Cys-2199–Cys-2240, Cys-2226–Cys-2254, Cys-2259–Cys-2299, Cys-2285–Cys-2313, Cys-2318–Cys-2358, Cys-2344–Cys-2371, Cys-2376–Cys-2417, Cys-2403–Cys-2430, Cys-2435–Cys-2475, Cys-2461–Cys-2488, Cys-2493–Cys-2533, Cys-2519–Cys-2546, Cys-2551–Cys-2591, and Cys-2577–Cys-2603. Residues 1740–1779 (DVDECAVGSDCSEHASCLNTNGSYICSCKPPYTGDGKNCA) form the EGF-like 7; calcium-binding domain. N-linked (GlcNAc...) asparagine glycosylation is present at Asn-1760. Sushi domains follow at residues 1776–1839 (KNCA…SCEA), 1840–1897 (ISCG…VCEL), 1898–1955 (VKCS…SCQL), 1956–2013 (VSCG…QCLA), 2014–2075 (VSCD…RCIA), 2076–2138 (HFCE…QCIP), 2139–2196 (VRCG…TCHP), 2197–2256 (VSCN…SCTP), 2257–2315 (LNCG…KCVP), 2316–2373 (TKCA…VCKL), 2374–2432 (VLCQ…ECVP), 2433–2490 (VECP…MCRP), 2491–2548 (IECP…SCNA), and 2549–2605 (IHCS…TCVP). Residues 2634–2641 (DMMEVPYL) are important for the interaction with integrin ITGA9:ITGB1. 14 consecutive Sushi domains span residues 2659–2708 (EESL…SCIS), 2709–2766 (IECD…RCEV), 2767–2824 (ISCS…VCLP), 2825–2882 (VDCG…SCVP), 2883–2940 (VRCP…ICKP), 2941–2998 (ATCG…SCLP), 2999–3054 (CTCS…LCEH), 3055–3112 (ADCG…TCEP), 3113–3171 (VSCG…NCSP), 3172–3231 (KTCP…SCIP), 3232–3289 (VVCG…VCRE), 3290–3347 (SRCE…LCKP), 3348–3406 (NPCP…RCEK), and 3407–3463 (ISCG…ICRA). 33 disulfides stabilise this stretch: Cys-2679–Cys-2706, Cys-2711–Cys-2751, Cys-2737–Cys-2764, Cys-2769–Cys-2809, Cys-2795–Cys-2822, Cys-2827–Cys-2867, Cys-2853–Cys-2880, Cys-2885–Cys-2925, Cys-2911–Cys-2938, Cys-2943–Cys-2983, Cys-2969–Cys-2996, Cys-3001–Cys-3040, Cys-3026–Cys-3052, Cys-3057–Cys-3097, Cys-3083–Cys-3110, Cys-3115–Cys-3156, Cys-3141–Cys-3169, Cys-3174–Cys-3214, Cys-3200–Cys-3229, Cys-3234–Cys-3274, Cys-3260–Cys-3287, Cys-3292–Cys-3332, Cys-3318–Cys-3345, Cys-3350–Cys-3391, Cys-3377–Cys-3404, Cys-3409–Cys-3449, Cys-3435–Cys-3461, Cys-3497–Cys-3507, Cys-3501–Cys-3513, Cys-3515–Cys-3524, Cys-3529–Cys-3539, Cys-3533–Cys-3545, and Cys-3547–Cys-3556. 2 EGF-like domains span residues 3493–3525 (EEPICILPCLNGGRCVAPYRCDCPAGWTGSRCH) and 3526–3557 (TATCQSPCLNGGKCVRPNRCHCLSSWTGHDCS).

In terms of assembly, interacts (via Sushi domain 21) with ITGA9:ITGB1; thereby inhibits Ca(2+) intracellular signaling and as a result represses vasocontraction. Interacts (via Sushi domain 21) with ITGA4:ITGB1; thereby inhibits Ca(2+) intracellular signaling and as a result represses vasocontraction. Interacts with ANGPT1 and ANGPT2. Interacts with PEAR1 (via extracellular domain). Interacts with HSPG2, TLN1, FN1, COPA, CCT2, IQGAP1, LAMC1 and NID1. Interacts (via C-terminus) with TIE1.

It is found in the secreted. Its subcellular location is the nucleus. It localises to the cytoplasm. The protein localises to the membrane. Its function is as follows. Required for morphological development, cell alignment and migration of lymphatic endothelial cells during embryonic development, potentially via modulation of ANGPT2-TIE1 signaling and subsequent activation of FOXC2 transcription. Required for embryonic lymphatic vascular development, via mediating the correct formation of the first lymphovenous contact site and tight association of the lymphatic endothelium with the venous endothelium. Represses PRKCA-mediated L-type voltage-gated channel Ca(2+) influx and ROCK-mediated calcium sensitivity in vascular smooth muscle cells, via its interaction with integrins, thereby inhibiting vasocontraction. Promotes platelet activation, via its interaction with PEAR1 and subsequent activation of AKT/mTOR signaling. Plays a role in epidermal development and keratinocyte differentiation, independent of cell-cell adhesion. May play a role in initial cell attachment of stromal osteogenic cells. May promote myoblast cell adhesion when in the presence of integrin ITGA9:ITGB1. This is Sushi, von Willebrand factor type A, EGF and pentraxin domain-containing protein 1 (Svep1) from Rattus norvegicus (Rat).